Here is a 266-residue protein sequence, read N- to C-terminus: 2-C-methyl-D-erythritol 4-phosphate cytidylyltransferase (266 aa).

Residues 229-266 (NRDCGPGTRDPESAHPQSSVSASAFSGPGSRAPGPEEI) are disordered. Residues 243-252 (HPQSSVSASA) show a composition bias toward polar residues.

The protein belongs to the IspD/TarI cytidylyltransferase family. IspD subfamily.

It catalyses the reaction 2-C-methyl-D-erythritol 4-phosphate + CTP + H(+) = 4-CDP-2-C-methyl-D-erythritol + diphosphate. The protein operates within isoprenoid biosynthesis; isopentenyl diphosphate biosynthesis via DXP pathway; isopentenyl diphosphate from 1-deoxy-D-xylulose 5-phosphate: step 2/6. Its function is as follows. Catalyzes the formation of 4-diphosphocytidyl-2-C-methyl-D-erythritol from CTP and 2-C-methyl-D-erythritol 4-phosphate (MEP). The polypeptide is 2-C-methyl-D-erythritol 4-phosphate cytidylyltransferase (Xanthomonas axonopodis pv. citri (strain 306)).